A 150-amino-acid chain; its full sequence is Macrodomain Ter protein (150 aa).

Belongs to the MatP family. Homodimer.

The protein resides in the cytoplasm. Functionally, required for spatial organization of the terminus region of the chromosome (Ter macrodomain) during the cell cycle. Prevents early segregation of duplicated Ter macrodomains during cell division. Binds specifically to matS, which is a 13 bp signature motif repeated within the Ter macrodomain. The polypeptide is Macrodomain Ter protein (Salmonella typhi).